We begin with the raw amino-acid sequence, 274 residues long: ATP synthase subunit a (274 aa).

5 helical membrane passes run 43-63 (TLNI…LYVF), 103-123 (VIAP…VMDL), 144-164 (VVPT…FVLI), 223-243 (LIFI…LSLP), and 245-265 (AIFH…LTIV).

The protein belongs to the ATPase A chain family. As to quaternary structure, F-type ATPases have 2 components, CF(1) - the catalytic core - and CF(0) - the membrane proton channel. CF(1) has five subunits: alpha(3), beta(3), gamma(1), delta(1), epsilon(1). CF(0) has three main subunits: a(1), b(2) and c(9-12). The alpha and beta chains form an alternating ring which encloses part of the gamma chain. CF(1) is attached to CF(0) by a central stalk formed by the gamma and epsilon chains, while a peripheral stalk is formed by the delta and b chains.

It is found in the cell inner membrane. Its function is as follows. Key component of the proton channel; it plays a direct role in the translocation of protons across the membrane. This Photorhabdus laumondii subsp. laumondii (strain DSM 15139 / CIP 105565 / TT01) (Photorhabdus luminescens subsp. laumondii) protein is ATP synthase subunit a.